The sequence spans 317 residues: Apolipoprotein E (317 aa).

The signal sequence occupies residues 1–18; sequence MKVLWAALLVTFLAGCQA. Tandem repeats lie at residues 80-101, 102-123, 124-145, 146-167, 168-189, 190-211, 212-233, and 234-255. An 8 X 22 AA approximate tandem repeats region spans residues 80–255; sequence TLMDETMKEL…RLDEVKEQVA (176 aa). Position 143 is a methionine sulfoxide (Met143). Phosphoserine is present on Ser147. An LDL and other lipoprotein receptors binding region spans residues 158-168; the sequence is HLRKLRKRLLR. 162–165 contributes to the heparin binding site; sequence LRKR. The segment at 210–290 is lipid-binding and lipoprotein association; that stretch reads AATVGSLAGQ…SWFEPLVEDM (81 aa). 229–236 is a heparin binding site; the sequence is GERLRARM. Residues 266–317 form a homooligomerization region; the sequence is QQISLQAEAFQARLKSWFEPLVEDMQRQWAGLVEKVQAAVGASTAPVPSDNH. The specificity for association with VLDL stretch occupies residues 278–290; that stretch reads RLKSWFEPLVEDM.

Belongs to the apolipoprotein A1/A4/E family. In terms of assembly, homotetramer. May interact with ABCA1; functionally associated with ABCA1 in the biogenesis of HDLs. May interact with APP/A4 amyloid-beta peptide; the interaction is extremely stable in vitro but its physiological significance is unclear. May interact with MAPT. May interact with MAP2. In the cerebrospinal fluid, interacts with secreted SORL1. Interacts with PMEL; this allows the loading of PMEL luminal fragment on ILVs to induce fibril nucleation. Post-translationally, APOE exists as multiple glycosylated and sialylated glycoforms within cells and in plasma. The extent of glycosylation and sialylation are tissue and context specific. Glycated in plasma VLDL. In terms of processing, phosphorylated by FAM20C in the extracellular medium.

It localises to the secreted. Its subcellular location is the extracellular space. The protein resides in the extracellular matrix. The protein localises to the extracellular vesicle. It is found in the endosome. It localises to the multivesicular body. In terms of biological role, APOE is an apolipoprotein, a protein associating with lipid particles, that mainly functions in lipoprotein-mediated lipid transport between organs via the plasma and interstitial fluids. APOE is a core component of plasma lipoproteins and is involved in their production, conversion and clearance. Apolipoproteins are amphipathic molecules that interact both with lipids of the lipoprotein particle core and the aqueous environment of the plasma. As such, APOE associates with chylomicrons, chylomicron remnants, very low density lipoproteins (VLDL) and intermediate density lipoproteins (IDL) but shows a preferential binding to high-density lipoproteins (HDL). It also binds a wide range of cellular receptors including the LDL receptor/LDLR, the LDL receptor-related proteins LRP1, LRP2 and LRP8 and the very low-density lipoprotein receptor/VLDLR that mediate the cellular uptake of the APOE-containing lipoprotein particles. Finally, APOE also has a heparin-binding activity and binds heparan-sulfate proteoglycans on the surface of cells, a property that supports the capture and the receptor-mediated uptake of APOE-containing lipoproteins by cells. A main function of APOE is to mediate lipoprotein clearance through the uptake of chylomicrons, VLDLs, and HDLs by hepatocytes. APOE is also involved in the biosynthesis by the liver of VLDLs as well as their uptake by peripheral tissues ensuring the delivery of triglycerides and energy storage in muscle, heart and adipose tissues. By participating in the lipoprotein-mediated distribution of lipids among tissues, APOE plays a critical role in plasma and tissues lipid homeostasis. APOE is also involved in two steps of reverse cholesterol transport, the HDLs-mediated transport of cholesterol from peripheral tissues to the liver, and thereby plays an important role in cholesterol homeostasis. First, it is functionally associated with ABCA1 in the biogenesis of HDLs in tissues. Second, it is enriched in circulating HDLs and mediates their uptake by hepatocytes. APOE also plays an important role in lipid transport in the central nervous system, regulating neuron survival and sprouting. This Colobus guereza (Mantled guereza) protein is Apolipoprotein E (APOE).